The sequence spans 614 residues: UvrABC system protein C (614 aa).

A GIY-YIG domain is found at 26–104; the sequence is NLPGVYKMLG…IKEYRPPYNV (79 aa). Residues 215–250 form the UVR domain; sequence SDIHTALIEKMEASAEELDFEKAVFYRDQLSMLREV.

Belongs to the UvrC family. As to quaternary structure, interacts with UvrB in an incision complex.

It localises to the cytoplasm. Its function is as follows. The UvrABC repair system catalyzes the recognition and processing of DNA lesions. UvrC both incises the 5' and 3' sides of the lesion. The N-terminal half is responsible for the 3' incision and the C-terminal half is responsible for the 5' incision. The protein is UvrABC system protein C of Psychrobacter cryohalolentis (strain ATCC BAA-1226 / DSM 17306 / VKM B-2378 / K5).